The chain runs to 115 residues: U2-ctenitoxin-Pn1b (115 aa).

Positions 1–17 (MKVAVIILSILVLAAAS) are cleaved as a signal peptide. A propeptide spanning residues 18–61 (ESIEEYREDFSRPNAMERSANDWIPTAPSAVERSADFAVEELER) is cleaved from the precursor. Intrachain disulfides connect C64–C78, C71–C84, C75–C113, C77–C98, and C86–C96. K115 is a propeptide.

This sequence belongs to the neurotoxin 03 (Tx2) family. 04 subfamily. As to expression, expressed by the venom gland.

The protein resides in the secreted. Its function is as follows. Blocks voltage-gated sodium channels (Nav). This chain is U2-ctenitoxin-Pn1b, found in Phoneutria nigriventer (Brazilian armed spider).